The following is a 338-amino-acid chain: Probable G-protein coupled receptor 160 (338 aa).

Residues 1 to 23 (MTALSSENCSFQYQLRQTNQPLD) are Extracellular-facing. The N-linked (GlcNAc...) asparagine glycan is linked to Asn8. The chain crosses the membrane as a helical span at residues 24–44 (VNYLLFLIILGKILLNILTLG). The Cytoplasmic segment spans residues 45–58 (MRRKNTCQNFMEYF). The helical transmembrane segment at 59 to 79 (CISLAFVDLLLLVNISIILYF) threads the bilayer. Topologically, residues 80–93 (RDFVLLSIRFTKYH) are extracellular. The chain crosses the membrane as a helical span at residues 94-114 (ICLFTQIISFTYGFLHYPVFL). Residues 115-136 (TACIDYCLNFSKTTKLSFKCQK) are Cytoplasmic-facing. Residues 137-157 (LFYFFTVILIWISVLAYVLGD) form a helical membrane-spanning segment. Residues 158–177 (PAIYQSLKAQNAYSRHCPFY) lie on the Extracellular side of the membrane. A helical transmembrane segment spans residues 178 to 198 (VSIQSYWLSFFMVMILFVAFI). At 199–244 (TCWEEVTTLVQAIRITSYMNETILYFPFSSHSSYTVRSKKIFLSKL) the chain is on the cytoplasmic side. The helical transmembrane segment at 245–265 (IVCFLSTWLPFVLLQVIIVLL) threads the bilayer. Residues 266-268 (KVQ) are Extracellular-facing. A helical transmembrane segment spans residues 269-289 (IPAYIEMNIPWLYFVNSFLIA). Over 290 to 338 (TVYWFNCHKLNLKDIGLPLDPFVNWKCCFIPLTIPNLEQIEKPISIMIC) the chain is Cytoplasmic.

This sequence belongs to the G-protein coupled receptor 1 family.

It localises to the cell membrane. Orphan receptor. The sequence is that of Probable G-protein coupled receptor 160 (GPR160) from Homo sapiens (Human).